The primary structure comprises 388 residues: Succinate--CoA ligase [ADP-forming] subunit beta (388 aa).

An ATP-grasp domain is found at 9 to 245 (KELLAGYGLP…KSQENERELK (237 aa)). ATP is bound by residues K46, 53–55 (GRG), E100, Y103, and E108. 2 residues coordinate Mg(2+): N200 and D214. Substrate contacts are provided by residues N265 and 322-324 (GIV).

The protein belongs to the succinate/malate CoA ligase beta subunit family. In terms of assembly, heterotetramer of two alpha and two beta subunits. Requires Mg(2+) as cofactor.

The enzyme catalyses succinate + ATP + CoA = succinyl-CoA + ADP + phosphate. The catalysed reaction is GTP + succinate + CoA = succinyl-CoA + GDP + phosphate. It functions in the pathway carbohydrate metabolism; tricarboxylic acid cycle; succinate from succinyl-CoA (ligase route): step 1/1. Functionally, succinyl-CoA synthetase functions in the citric acid cycle (TCA), coupling the hydrolysis of succinyl-CoA to the synthesis of either ATP or GTP and thus represents the only step of substrate-level phosphorylation in the TCA. The beta subunit provides nucleotide specificity of the enzyme and binds the substrate succinate, while the binding sites for coenzyme A and phosphate are found in the alpha subunit. In Neisseria meningitidis serogroup C (strain 053442), this protein is Succinate--CoA ligase [ADP-forming] subunit beta.